The sequence spans 506 residues: Lysine--tRNA ligase (506 aa).

2 residues coordinate Mg(2+): glutamate 416 and glutamate 423.

Belongs to the class-II aminoacyl-tRNA synthetase family. As to quaternary structure, homodimer. Mg(2+) serves as cofactor.

It is found in the cytoplasm. The enzyme catalyses tRNA(Lys) + L-lysine + ATP = L-lysyl-tRNA(Lys) + AMP + diphosphate. This is Lysine--tRNA ligase from Xylella fastidiosa (strain M23).